We begin with the raw amino-acid sequence, 151 residues long: Hemoglobin-2 (151 aa).

N-acetylthreonine is present on Thr-2. Positions 3–148 (TLTNPQKAAI…ICKTLGDYMK (146 aa)) constitute a Globin domain. His-97 lines the heme b pocket.

The protein belongs to the globin family. As to quaternary structure, homotetramer.

The protein localises to the cytoplasm. This chain is Hemoglobin-2, found in Phacoides pectinatus (Thick lucine).